The primary structure comprises 61 residues: MDILKKSLFLALFLGLVSISFCDEEKRQDDDESNESEEKKEIHEEGSQEERREKPPPWVPV.

The first 22 residues, 1–22 (MDILKKSLFLALFLGLVSISFC), serve as a signal peptide directing secretion. Residues 23–53 (DEEKRQDDDESNESEEKKEIHEEGSQEERRE) constitute a propeptide that is removed on maturation. The tract at residues 24-61 (EEKRQDDDESNESEEKKEIHEEGSQEERREKPPPWVPV) is disordered. Over residues 36 to 55 (SEEKKEIHEEGSQEERREKP) the composition is skewed to basic and acidic residues.

As to expression, expressed by the skin glands.

Its subcellular location is the secreted. Its function is as follows. The synthetic peptide inhibits bradykinin-induced relaxation of rat tail artery smooth muscle, and also has anti-proliferative effects on the human prostate cancer cell lines LNCaP, PC3 and DU145. The polypeptide is Tryptophyllin-1 (Phyllomedusa sauvagei (Sauvage's leaf frog)).